The chain runs to 422 residues: CRISPR-associated endodeoxyribonuclease Cas12f1 (422 aa).

Positions 1-126 are recognition domain (REC); it reads MIKVYRYEIV…PSYKRDIPLD (126 aa). The interval 127–211 is wedge domain (WED); it reads LIKENISVNR…YLNISYDFEP (85 aa). Residues 212–220 are linker; the sequence is QTRVLDLNK. The ruvC-I stretch occupies residues 221–370; sequence IMGIDLGVAV…IKIDPQYTSQ (150 aa). Catalysis depends on residues Asp225 and Glu324. Residues 371–399 are target nucleic acid-binding (TNB); it reads RCSECGNIDSGNRIGQAIFKCRACGYEAN. Zn(2+) contacts are provided by Cys372, Cys375, Cys391, and Cys394. The tract at residues 400 to 420 is ruvC-II; it reads ADYNAARNIAIPNIDKIIAES. Asp401 is a catalytic residue.

Belongs to the CRISPR-associated endonuclease Cas12f family. An asymmetric homodimer. Guide RNA is probably required for dimerization. It depends on Mg(2+) as a cofactor. Requires Zn(2+) as cofactor.

CRISPR (clustered regularly interspaced short palindromic repeat), is an adaptive immune system that provides protection against mobile genetic elements (viruses, transposable elements and conjugative plasmids). CRISPR clusters contain sequences complementary to antecedent mobile elements and target invading nucleic acids. CRISPR clusters are transcribed and processed into CRISPR RNA (crRNA), which requires a trans-encoded small RNA (tracrRNA), but not this protein. Recognizes a short motif in the CRISPR repeat sequences (the 5' PAM or protospacer adjacent motif, YTT in this organism) to help distinguish self versus nonself, as targets within the CRISPR locus do not have PAMs. Has dsDNA endonuclease activity upon expression in E.coli of this protein, a mini CRISPR array and the probable tracrRNA. Plasmid cleavage is centered around positions 19-24 base pairs 3' of PAM. The mini system protects E.coli against transformation by foreign plasmids. This chain is CRISPR-associated endodeoxyribonuclease Cas12f1, found in Sulfoacidibacillus thermotolerans (Acidibacillus sulfuroxidans).